Consider the following 284-residue polypeptide: Tryptophan 2,3-dioxygenase (284 aa).

Substrate-binding positions include 51–55, Y113, and R117; that span reads FIIQH. Residue H240 participates in heme binding. Residue T254 coordinates substrate.

Belongs to the tryptophan 2,3-dioxygenase family. As to quaternary structure, homotetramer. Heme serves as cofactor.

The enzyme catalyses L-tryptophan + O2 = N-formyl-L-kynurenine. It functions in the pathway amino-acid degradation; L-tryptophan degradation via kynurenine pathway; L-kynurenine from L-tryptophan: step 1/2. Its function is as follows. Heme-dependent dioxygenase that catalyzes the oxidative cleavage of the L-tryptophan (L-Trp) pyrrole ring and converts L-tryptophan to N-formyl-L-kynurenine. Catalyzes the oxidative cleavage of the indole moiety. This is Tryptophan 2,3-dioxygenase from Rhodococcus jostii (strain RHA1).